We begin with the raw amino-acid sequence, 101 residues long: NADH-quinone oxidoreductase subunit K (101 aa).

3 helical membrane passes run 4–24, 30–50, and 65–85; these read LEHYLTVSAALLVIGIFGIFL, IVILMSIELMLLAVNINLVAF, and FVLTVAAAEAAIGLAILVTFF.

It belongs to the complex I subunit 4L family. NDH-1 is composed of 14 different subunits. Subunits NuoA, H, J, K, L, M, N constitute the membrane sector of the complex.

The protein resides in the cell inner membrane. It carries out the reaction a quinone + NADH + 5 H(+)(in) = a quinol + NAD(+) + 4 H(+)(out). Its function is as follows. NDH-1 shuttles electrons from NADH, via FMN and iron-sulfur (Fe-S) centers, to quinones in the respiratory chain. The immediate electron acceptor for the enzyme in this species is believed to be ubiquinone. Couples the redox reaction to proton translocation (for every two electrons transferred, four hydrogen ions are translocated across the cytoplasmic membrane), and thus conserves the redox energy in a proton gradient. This Cereibacter sphaeroides (strain ATCC 17029 / ATH 2.4.9) (Rhodobacter sphaeroides) protein is NADH-quinone oxidoreductase subunit K.